Here is a 549-residue protein sequence, read N- to C-terminus: Glucose-6-phosphate isomerase (549 aa).

The active-site Proton donor is the Glu355. Residues His387 and Lys515 contribute to the active site.

This sequence belongs to the GPI family.

The protein localises to the cytoplasm. It carries out the reaction alpha-D-glucose 6-phosphate = beta-D-fructose 6-phosphate. It participates in carbohydrate biosynthesis; gluconeogenesis. The protein operates within carbohydrate degradation; glycolysis; D-glyceraldehyde 3-phosphate and glycerone phosphate from D-glucose: step 2/4. Its function is as follows. Catalyzes the reversible isomerization of glucose-6-phosphate to fructose-6-phosphate. The chain is Glucose-6-phosphate isomerase from Haemophilus influenzae (strain 86-028NP).